The following is a 256-amino-acid chain: Indole-3-glycerol phosphate synthase (256 aa).

The protein belongs to the TrpC family.

It catalyses the reaction 1-(2-carboxyphenylamino)-1-deoxy-D-ribulose 5-phosphate + H(+) = (1S,2R)-1-C-(indol-3-yl)glycerol 3-phosphate + CO2 + H2O. It participates in amino-acid biosynthesis; L-tryptophan biosynthesis; L-tryptophan from chorismate: step 4/5. This chain is Indole-3-glycerol phosphate synthase, found in Chlorobaculum tepidum (strain ATCC 49652 / DSM 12025 / NBRC 103806 / TLS) (Chlorobium tepidum).